Reading from the N-terminus, the 673-residue chain is MVVKLMIDFFLKSEYLPAGDQPKAIKEIENSILLGNKYQTLKGVTGSGKTFTIANIIKDLNRPALVVSHNKTLAAQLYREFKDFFPNNAVEYFVSYYDYYQPESYVPSKDLFIEKEATINTEIEIKRIRTVTSLAKRRDVIVVATVSSIYALGSPDFFKKSAREFFVGQKISIKEISDIFVELYYERTLMNLERDKFSIKGDIVEIWPSSEHGEFAYRICLDFDEIVEIYRVSSFSKKNLGATNSFTLFAKSYFVIPYENVLEAIPKISHDLSLQCQYFKDNGKLVEAERLKQRVEYDLEMLRETGFCSGIENYSKYLSGSTMERPYCLFDFFPKDXLLFVDESHVTLPQFRGMYNGDHSRKLNLVNFGFRLPAALENRPLKYDEFEALINQVVFVSATPGVEENEKSSVVVDQIIRPTGLVDPEIITRHSDGQMEDLYSEIQKRVALKERVLITTLTKKMSEDLTEYLVNLGVRAKYLHSELDTLERVEVISLLRKSEIDVIVGINLLREGLDIPEVSLVAILDADKVGFLRSTTSLIQTIGRAARNSNGLVIMYYDKISLAMREAIEETNRRRQIQIDYNKKNNITPKTIVKKIQNILEKELNNKNKNVGYDFEKIISGERLSKKKLIDKLKFDLEEAVNDERFEDAIVLRDKIKELSSKISIARNKKREV.

Residues 30–417 (NSILLGNKYQ…SSVVVDQIIR (388 aa)) enclose the Helicase ATP-binding domain. 43 to 50 (GVTGSGKT) is a binding site for ATP. A Beta-hairpin motif is present at residues 96-119 (YYDYYQPESYVPSKDLFIEKEATI). The 167-residue stretch at 434–600 (QMEDLYSEIQ…TIVKKIQNIL (167 aa)) folds into the Helicase C-terminal domain. Positions 627 to 662 (KKLIDKLKFDLEEAVNDERFEDAIVLRDKIKELSSK) constitute a UVR domain.

This sequence belongs to the UvrB family. In terms of assembly, forms a heterotetramer with UvrA during the search for lesions. Interacts with UvrC in an incision complex.

It localises to the cytoplasm. The UvrABC repair system catalyzes the recognition and processing of DNA lesions. A damage recognition complex composed of 2 UvrA and 2 UvrB subunits scans DNA for abnormalities. Upon binding of the UvrA(2)B(2) complex to a putative damaged site, the DNA wraps around one UvrB monomer. DNA wrap is dependent on ATP binding by UvrB and probably causes local melting of the DNA helix, facilitating insertion of UvrB beta-hairpin between the DNA strands. Then UvrB probes one DNA strand for the presence of a lesion. If a lesion is found the UvrA subunits dissociate and the UvrB-DNA preincision complex is formed. This complex is subsequently bound by UvrC and the second UvrB is released. If no lesion is found, the DNA wraps around the other UvrB subunit that will check the other stand for damage. The protein is UvrABC system protein B of Borreliella burgdorferi (strain ATCC 35210 / DSM 4680 / CIP 102532 / B31) (Borrelia burgdorferi).